A 212-amino-acid polypeptide reads, in one-letter code: Probable GTP-binding protein EngB (212 aa).

Positions 27–201 (GGIEIAFAGR…TRILSDWYQP (175 aa)) constitute an EngB-type G domain. Residues 35–42 (GRSNAGKS), 62–66 (GRTQL), 80–83 (DLPG), 147–150 (TKAD), and 180–182 (FSS) contribute to the GTP site. Positions 42 and 64 each coordinate Mg(2+).

This sequence belongs to the TRAFAC class TrmE-Era-EngA-EngB-Septin-like GTPase superfamily. EngB GTPase family. Mg(2+) is required as a cofactor.

In terms of biological role, necessary for normal cell division and for the maintenance of normal septation. The polypeptide is Probable GTP-binding protein EngB (Tolumonas auensis (strain DSM 9187 / NBRC 110442 / TA 4)).